A 447-amino-acid polypeptide reads, in one-letter code: Argininosuccinate synthase (447 aa).

Residues 20–28 (AFSGGLDTS) and A46 contribute to the ATP site. Position 102 (Y102) interacts with L-citrulline. Residues G132 and T134 each coordinate ATP. Residues T134, N138, and D139 each coordinate L-aspartate. N138 provides a ligand contact to L-citrulline. D139 lines the ATP pocket. L-citrulline is bound by residues R142 and S195. D197 serves as a coordination point for ATP. 3 residues coordinate L-citrulline: T204, E206, and E283.

This sequence belongs to the argininosuccinate synthase family. Type 2 subfamily. Homotetramer.

The protein localises to the cytoplasm. The catalysed reaction is L-citrulline + L-aspartate + ATP = 2-(N(omega)-L-arginino)succinate + AMP + diphosphate + H(+). It functions in the pathway amino-acid biosynthesis; L-arginine biosynthesis; L-arginine from L-ornithine and carbamoyl phosphate: step 2/3. The chain is Argininosuccinate synthase (argG) from Neisseria meningitidis serogroup A / serotype 4A (strain DSM 15465 / Z2491).